We begin with the raw amino-acid sequence, 312 residues long: 4-hydroxy-3-methylbut-2-enyl diphosphate reductase (312 aa).

C14 is a [4Fe-4S] cluster binding site. (2E)-4-hydroxy-3-methylbut-2-enyl diphosphate is bound by residues H43 and H76. Positions 43 and 76 each coordinate dimethylallyl diphosphate. Isopentenyl diphosphate contacts are provided by H43 and H76. Residue C98 coordinates [4Fe-4S] cluster. H125 contributes to the (2E)-4-hydroxy-3-methylbut-2-enyl diphosphate binding site. H125 is a binding site for dimethylallyl diphosphate. Residue H125 coordinates isopentenyl diphosphate. Residue E127 is the Proton donor of the active site. T165 is a (2E)-4-hydroxy-3-methylbut-2-enyl diphosphate binding site. C195 is a binding site for [4Fe-4S] cluster. 4 residues coordinate (2E)-4-hydroxy-3-methylbut-2-enyl diphosphate: S223, S224, N225, and S269. Dimethylallyl diphosphate is bound by residues S223, S224, N225, and S269. Positions 223, 224, 225, and 269 each coordinate isopentenyl diphosphate.

This sequence belongs to the IspH family. Requires [4Fe-4S] cluster as cofactor.

The enzyme catalyses isopentenyl diphosphate + 2 oxidized [2Fe-2S]-[ferredoxin] + H2O = (2E)-4-hydroxy-3-methylbut-2-enyl diphosphate + 2 reduced [2Fe-2S]-[ferredoxin] + 2 H(+). It carries out the reaction dimethylallyl diphosphate + 2 oxidized [2Fe-2S]-[ferredoxin] + H2O = (2E)-4-hydroxy-3-methylbut-2-enyl diphosphate + 2 reduced [2Fe-2S]-[ferredoxin] + 2 H(+). The protein operates within isoprenoid biosynthesis; dimethylallyl diphosphate biosynthesis; dimethylallyl diphosphate from (2E)-4-hydroxy-3-methylbutenyl diphosphate: step 1/1. It participates in isoprenoid biosynthesis; isopentenyl diphosphate biosynthesis via DXP pathway; isopentenyl diphosphate from 1-deoxy-D-xylulose 5-phosphate: step 6/6. In terms of biological role, catalyzes the conversion of 1-hydroxy-2-methyl-2-(E)-butenyl 4-diphosphate (HMBPP) into a mixture of isopentenyl diphosphate (IPP) and dimethylallyl diphosphate (DMAPP). Acts in the terminal step of the DOXP/MEP pathway for isoprenoid precursor biosynthesis. This chain is 4-hydroxy-3-methylbut-2-enyl diphosphate reductase, found in Leptospira interrogans serogroup Icterohaemorrhagiae serovar copenhageni (strain Fiocruz L1-130).